We begin with the raw amino-acid sequence, 383 residues long: DNA dC-&gt;dU-editing enzyme APOBEC-3G (383 aa).

The tract at residues 1–60 (MKPQFRNTVERMYRDTFFYNFNNRPILSRRNTVWLCYEVKTRGPSMPTWDAKIFRGQVYS) is essential for cytoplasmic localization. CMP/dCMP-type deaminase domains are found at residues 29-138 (RRNT…LRVL) and 214-327 (GQHE…LRTL). The residue at position 32 (threonine 32) is a Phosphothreonine; by PKA. 3 residues coordinate Zn(2+): histidine 65, cysteine 97, and cysteine 100. The segment at 209-335 (KPWVSGQHET…TLHRDGAKIA (127 aa)) is necessary for homooligomerization. The tract at residues 213–215 (SGQ) is interaction with DNA. Threonine 218 is subject to Phosphothreonine; by PKA and CAMK2. Residue histidine 257 coordinates Zn(2+). The active-site Proton donor is the glutamate 259. The Zn(2+) site is built by cysteine 287 and cysteine 290. The interaction with DNA stretch occupies residues 312-319 (RIYDDQGR).

The protein belongs to the cytidine and deoxycytidylate deaminase family. In terms of assembly, homodimer. Requires Zn(2+) as cofactor.

Its subcellular location is the cytoplasm. It localises to the nucleus. The protein localises to the P-body. It catalyses the reaction a 2'-deoxycytidine in single-stranded DNA + H2O + H(+) = a 2'-deoxyuridine in single-stranded DNA + NH4(+). In terms of biological role, DNA deaminase (cytidine deaminase) which acts as an inhibitor of retrovirus replication and retrotransposon mobility. After the penetration of retroviral nucleocapsids into target cells of infection and the initiation of reverse transcription, it can induce the conversion of cytosine to uracil in the minus-sense single-strand viral DNA, leading to G-to-A hypermutations in the subsequent plus-strand viral DNA. The resultant detrimental levels of mutations in the proviral genome, along with a deamination-independent mechanism that works prior to the proviral integration, together exert efficient antiretroviral effects in infected target cells. Selectively targets single-stranded DNA and does not deaminate double-stranded DNA or single- or double-stranded RNA. This Papio anubis (Olive baboon) protein is DNA dC-&gt;dU-editing enzyme APOBEC-3G (APOBEC3G).